The sequence spans 162 residues: Shikimate kinase (162 aa).

An ATP-binding site is contributed by 11-16 (GSGKSS). Residue Ser15 coordinates Mg(2+). Substrate-binding residues include Asp33, Arg57, and Gly80. Arg116 is an ATP binding site. Position 132 (Arg132) interacts with substrate.

Belongs to the shikimate kinase family. In terms of assembly, monomer. Mg(2+) is required as a cofactor.

It localises to the cytoplasm. It carries out the reaction shikimate + ATP = 3-phosphoshikimate + ADP + H(+). It functions in the pathway metabolic intermediate biosynthesis; chorismate biosynthesis; chorismate from D-erythrose 4-phosphate and phosphoenolpyruvate: step 5/7. Functionally, catalyzes the specific phosphorylation of the 3-hydroxyl group of shikimic acid using ATP as a cosubstrate. The protein is Shikimate kinase of Helicobacter acinonychis (strain Sheeba).